The primary structure comprises 228 residues: Pyridoxamine 5'-phosphate oxidase (228 aa).

20–23 (QYDK) is a binding site for pyridoxal 5'-phosphate. A Glycyl lysine isopeptide (Lys-Gly) (interchain with G-Cter in ubiquitin) cross-link involves residue Lys-29. 73–76 (RILL) provides a ligand contact to FMN. Position 78 (Lys-78) interacts with pyridoxal 5'-phosphate. FMN-binding positions include 88–89 (YS), 95–96 (RK), and Gln-118. Pyridoxal 5'-phosphate contacts are provided by Tyr-136, Arg-140, and Ser-144. Residues 153 to 154 (QS) and Trp-199 each bind FMN. Residue 205–207 (RLH) participates in pyridoxal 5'-phosphate binding. An FMN-binding site is contributed by Arg-209.

This sequence belongs to the pyridoxamine 5'-phosphate oxidase family. Homodimer. FMN is required as a cofactor.

It is found in the mitochondrion intermembrane space. The catalysed reaction is pyridoxamine 5'-phosphate + O2 + H2O = pyridoxal 5'-phosphate + H2O2 + NH4(+). The enzyme catalyses pyridoxine 5'-phosphate + O2 = pyridoxal 5'-phosphate + H2O2. The protein operates within cofactor metabolism; pyridoxal 5'-phosphate salvage; pyridoxal 5'-phosphate from pyridoxamine 5'-phosphate: step 1/1. It functions in the pathway cofactor metabolism; pyridoxal 5'-phosphate salvage; pyridoxal 5'-phosphate from pyridoxine 5'-phosphate: step 1/1. Its function is as follows. Catalyzes the oxidation of either pyridoxine 5'-phosphate (PNP) or pyridoxamine 5'-phosphate (PMP) into pyridoxal 5'-phosphate (PLP). The protein is Pyridoxamine 5'-phosphate oxidase (PDX3) of Saccharomyces cerevisiae (strain ATCC 204508 / S288c) (Baker's yeast).